The sequence spans 348 residues: Heptaprenyl diphosphate synthase component 2 (348 aa).

Residues Lys73, Arg76, and His105 each contribute to the isopentenyl diphosphate site. Mg(2+) contacts are provided by Asp112 and Asp116. Arg121 provides a ligand contact to all-trans-hexaprenyl diphosphate. Residue Arg122 coordinates isopentenyl diphosphate. All-trans-hexaprenyl diphosphate contacts are provided by Lys198, Thr199, and Gln236.

This sequence belongs to the FPP/GGPP synthase family. In terms of assembly, heterodimer of component I and II. Mg(2+) serves as cofactor.

The catalysed reaction is 4 isopentenyl diphosphate + (2E,6E)-farnesyl diphosphate = all-trans-heptaprenyl diphosphate + 4 diphosphate. In terms of biological role, supplies heptaprenyl diphosphate, the precursor for the side chain of the isoprenoid quinone menaquinone-7 (MQ-7). This chain is Heptaprenyl diphosphate synthase component 2 (hepT), found in Bacillus subtilis (strain 168).